We begin with the raw amino-acid sequence, 198 residues long: Putative glutathione S-transferase alpha-5 (198 aa).

A GST N-terminal domain is found at 2 to 78 (TKPTLTYFPV…YISEKHDFRG (77 aa)). Glutathione is bound by residues tyrosine 8, arginine 42, 49 to 50 (QL), and 62 to 63 (QT). The GST C-terminal domain maps to 80-198 (TKEERARAHQ…YLESRPQSNF (119 aa)).

Belongs to the GST superfamily. Alpha family.

The catalysed reaction is RX + glutathione = an S-substituted glutathione + a halide anion + H(+). In terms of biological role, conjugation of reduced glutathione to a wide number of exogenous and endogenous hydrophobic electrophiles. This is Putative glutathione S-transferase alpha-5 (gsta5) from Dictyostelium discoideum (Social amoeba).